Reading from the N-terminus, the 222-residue chain is Germin-like protein subfamily 1 member 5 (222 aa).

The N-terminal stretch at 1 to 24 (MKGLLHFLLAKIILLALASSFVYC) is a signal peptide. A disulfide bridge connects residues Cys-34 and Cys-50. 2 N-linked (GlcNAc...) asparagine glycosylation sites follow: Asn-38 and Asn-71. The 152-residue stretch at 64 to 215 (SGLNVPGNTS…AFALDFNKVK (152 aa)) folds into the Cupin type-1 domain. Residues His-112, His-114, and Glu-119 each coordinate Mn(2+). Asn-139 is a glycosylation site (N-linked (GlcNAc...) asparagine). His-163 is a Mn(2+) binding site.

This sequence belongs to the germin family. In terms of assembly, oligomer (believed to be a pentamer but probably hexamer).

The protein resides in the secreted. It is found in the extracellular space. The protein localises to the apoplast. In terms of biological role, may play a role in plant defense. Probably has no oxalate oxidase activity even if the active site is conserved. This is Germin-like protein subfamily 1 member 5 from Arabidopsis thaliana (Mouse-ear cress).